Consider the following 287-residue polypeptide: Pyridoxal kinase PdxY (287 aa).

Substrate is bound by residues serine 9 and 44–45; that span reads MQ. Residues aspartate 111, alanine 142, glutamate 147, and lysine 180 each coordinate ATP. Aspartate 221 is a substrate binding site.

It belongs to the pyridoxine kinase family. PdxY subfamily. In terms of assembly, homodimer. Requires Mg(2+) as cofactor.

The enzyme catalyses pyridoxal + ATP = pyridoxal 5'-phosphate + ADP + H(+). Its pathway is cofactor metabolism; pyridoxal 5'-phosphate salvage; pyridoxal 5'-phosphate from pyridoxal: step 1/1. Its function is as follows. Pyridoxal kinase involved in the salvage pathway of pyridoxal 5'-phosphate (PLP). Catalyzes the phosphorylation of pyridoxal to PLP. The polypeptide is Pyridoxal kinase PdxY (Burkholderia thailandensis (strain ATCC 700388 / DSM 13276 / CCUG 48851 / CIP 106301 / E264)).